Reading from the N-terminus, the 146-residue chain is Acidic phospholipase A2 S8-51 (146 aa).

Residues 1–19 (MYPAHLLVLLAVCVSLLGA) form the signal peptide. Positions 20–27 (ASIPPQPL) are excised as a propeptide. 7 cysteine pairs are disulfide-bonded: Cys38–Cys98, Cys54–Cys145, Cys56–Cys72, Cys71–Cys126, Cys78–Cys119, Cys87–Cys112, and Cys105–Cys117. The Ca(2+) site is built by Tyr55, Gly57, and Gly59. Residue His75 is part of the active site. Asp76 lines the Ca(2+) pocket. Residue Asp120 is part of the active site.

This sequence belongs to the phospholipase A2 family. Group I subfamily. D49 sub-subfamily. Ca(2+) serves as cofactor. Expressed by the venom gland.

The protein resides in the secreted. The enzyme catalyses a 1,2-diacyl-sn-glycero-3-phosphocholine + H2O = a 1-acyl-sn-glycero-3-phosphocholine + a fatty acid + H(+). Snake venom phospholipase A2 (PLA2) that inhibits collagen-induced platelet aggregation. PLA2 catalyzes the calcium-dependent hydrolysis of the 2-acyl groups in 3-sn-phosphoglycerides. The polypeptide is Acidic phospholipase A2 S8-51 (Austrelaps superbus (Lowland copperhead snake)).